A 418-amino-acid chain; its full sequence is ML-236A carboxylate methylbutanoyltransferase mlcH (418 aa).

Arginine 78 serves as a coordination point for monacolin J. Catalysis depends on serine 81, which acts as the Acyl-ester intermediate. Arginine 178, tyrosine 193, and tyrosine 262 together coordinate monacolin J. Residue glycine 370 participates in 2-methylbutanoate binding.

Belongs to the class-A beta-lactamase family.

It carries out the reaction ML-236A carboxylate + (S)-2-methylbutanoyl-[2-methylbutanoate polyketide synthase] = mevinic carboxylate + holo-[2-methylbutanoate polyketide synthase]. The protein operates within polyketide biosynthesis. In terms of biological role, compactin diketide synthase; part of the gene cluster that mediates the biosynthesis of compactin, also known as mevastatin or ML-236B, and which acts as a potent competitive inhibitor of HMG-CoA reductase. Compactin biosynthesis is performed in two stages. The first stage is catalyzed by the nonaketide synthase mlcA, which belongs to type I polyketide synthases and catalyzes the iterative nine-step formation of the polyketide. This PKS stage is completed by the action of dehydrogenase mlcG, which catalyzes the NADPH-dependent reduction of the unsaturated tetra-, penta- and heptaketide intermediates that arise during the mlcA-mediated biosynthesis of the nonaketide chain and leads to dihydro-ML-236C carboxylate. Covalently bound dihydro-ML-236C carboxylate is released from mlcA by the mlcF esterase. Conversion of dihydro-ML-236C carboxylate into ML-236A carboxylate is subsequently performed with the participation of molecular oxygen and P450 monoogygenase mlcC. Finally, mlcH performs the conversion of ML-236A carboxylate to ML-236B/compactin carboxylate through the addition of the side-chain diketide moiety produced by the diketide synthase mlcB. The protein is ML-236A carboxylate methylbutanoyltransferase mlcH of Penicillium citrinum.